The following is a 683-amino-acid chain: Tripartite terminase subunit 3 (683 aa).

The Walker A motif motif lies at 217–224; the sequence is IPRRHGKT. The Walker B motif motif lies at 312–317; sequence LLYIDE. The active-site For ATPase activity is the glutamate 317. Active-site for nuclease activity residues include aspartate 472, glutamate 546, and aspartate 658.

This sequence belongs to the herpesviridae TRM3 protein family. In terms of assembly, interacts with the terminase subunits TRM1 and TRM2. Interacts with portal protein.

It localises to the host nucleus. In terms of biological role, component of the molecular motor that translocates viral genomic DNA in empty capsid during DNA packaging. Forms a tripartite terminase complex together with TRM1 and TRM2 in the host cytoplasm. Once the complex reaches the host nucleus, it interacts with the capsid portal vertex. This portal forms a ring in which genomic DNA is translocated into the capsid. TRM3 carries an RNase H-like nuclease activity that plays an important role for the cleavage of concatemeric viral DNA into unit length genomes. The protein is Tripartite terminase subunit 3 of Saimiri sciureus (Common squirrel monkey).